The primary structure comprises 354 residues: UDP-N-acetylglucosamine--N-acetylmuramyl-(pentapeptide) pyrophosphoryl-undecaprenol N-acetylglucosamine transferase (354 aa).

UDP-N-acetyl-alpha-D-glucosamine contacts are provided by residues Thr-11–Gly-13, Arg-164, Ser-194, and Gln-289.

It belongs to the glycosyltransferase 28 family. MurG subfamily.

It localises to the cell membrane. The enzyme catalyses di-trans,octa-cis-undecaprenyl diphospho-N-acetyl-alpha-D-muramoyl-L-alanyl-D-glutamyl-meso-2,6-diaminopimeloyl-D-alanyl-D-alanine + UDP-N-acetyl-alpha-D-glucosamine = di-trans,octa-cis-undecaprenyl diphospho-[N-acetyl-alpha-D-glucosaminyl-(1-&gt;4)]-N-acetyl-alpha-D-muramoyl-L-alanyl-D-glutamyl-meso-2,6-diaminopimeloyl-D-alanyl-D-alanine + UDP + H(+). Its pathway is cell wall biogenesis; peptidoglycan biosynthesis. Functionally, cell wall formation. Catalyzes the transfer of a GlcNAc subunit on undecaprenyl-pyrophosphoryl-MurNAc-pentapeptide (lipid intermediate I) to form undecaprenyl-pyrophosphoryl-MurNAc-(pentapeptide)GlcNAc (lipid intermediate II). The chain is UDP-N-acetylglucosamine--N-acetylmuramyl-(pentapeptide) pyrophosphoryl-undecaprenol N-acetylglucosamine transferase from Clostridium botulinum (strain Loch Maree / Type A3).